We begin with the raw amino-acid sequence, 129 residues long: Large ribosomal subunit protein bL20 (129 aa).

It belongs to the bacterial ribosomal protein bL20 family.

Binds directly to 23S ribosomal RNA and is necessary for the in vitro assembly process of the 50S ribosomal subunit. It is not involved in the protein synthesizing functions of that subunit. This Rhodococcus jostii (strain RHA1) protein is Large ribosomal subunit protein bL20.